A 294-amino-acid polypeptide reads, in one-letter code: MSRIEALPTHIKAQVLAEALPWLKQLHGKVVVVKYGGNAMTDDTLRRAFAADMAFLRNCGIHPVVVHGGGPQITAMLRRLGIEGDFKGGFRVTTPEVLDVARMVLFGQVGRELVNLINAHGPYAVGITGEDAQLFTAVRRSVTVDGVATDIGLVGDVDQVNTAAMLDLVAAGRIPVVSTLAPDADGVVHNINADTAAAAVAEALGAEKLLMLTDIDGLYTRWPDRDSLVSEIDTGTLAQLLPTLELGMVPKVEACLRAVIGGVPSAHIIDGRVTHCVLVELFTDAGTGTKVVRG.

Substrate is bound by residues 69-70 (GG), arginine 91, and asparagine 190.

This sequence belongs to the acetylglutamate kinase family. ArgB subfamily.

It localises to the cytoplasm. The enzyme catalyses N-acetyl-L-glutamate + ATP = N-acetyl-L-glutamyl 5-phosphate + ADP. It functions in the pathway amino-acid biosynthesis; L-arginine biosynthesis; N(2)-acetyl-L-ornithine from L-glutamate: step 2/4. Functionally, catalyzes the ATP-dependent phosphorylation of N-acetyl-L-glutamate. This chain is Acetylglutamate kinase, found in Mycobacterium tuberculosis (strain CDC 1551 / Oshkosh).